The chain runs to 297 residues: Ribonuclease HIII (297 aa).

Residues 81–297 (IPIIGTDEVG…NTKKAQALLK (217 aa)) form the RNase H type-2 domain. Positions 87, 88, and 192 each coordinate a divalent metal cation.

The protein belongs to the RNase HII family. RnhC subfamily. The cofactor is Mn(2+). Mg(2+) serves as cofactor.

Its subcellular location is the cytoplasm. The catalysed reaction is Endonucleolytic cleavage to 5'-phosphomonoester.. In terms of biological role, endonuclease that specifically degrades the RNA of RNA-DNA hybrids. The sequence is that of Ribonuclease HIII from Streptococcus agalactiae serotype III (strain NEM316).